A 718-amino-acid polypeptide reads, in one-letter code: Sec-independent protein translocase protein TatCt (718 aa).

8 helical membrane-spanning segments follow: residues 34–54 (VFIV…LYVW), 84–104 (ILLQ…PPFI), 137–157 (LFAA…FAFL), 178–198 (FIFL…AMTG), 214–231 (WRHA…FTPP), 234–254 (FTQI…LYLA), 280–300 (LAGV…YGGV), and 325–345 (LGAF…AYLV). The interval 421–451 (REAEAADAEDEPGELEDRTTRAGGAFVSELT) is disordered. Acidic residues predominate over residues 425–434 (AADAEDEPGE). Helical transmembrane passes span 478-498 (AFWV…WLYT), 539-559 (FSTI…VWPA), 572-592 (TVFV…ALGY), 621-641 (FFWL…VPIL), 661-681 (EVTV…ITTM), and 682-702 (FMVT…LFVL).

The protein belongs to the TatC family. Forms a complex with TatA.

The protein resides in the cell membrane. Its function is as follows. Part of the twin-arginine translocation (Tat) system that transports large folded proteins containing a characteristic twin-arginine motif in their signal peptide across membranes. In Haloferax volcanii (strain ATCC 29605 / DSM 3757 / JCM 8879 / NBRC 14742 / NCIMB 2012 / VKM B-1768 / DS2) (Halobacterium volcanii), this protein is Sec-independent protein translocase protein TatCt.